A 673-amino-acid chain; its full sequence is MTNKPTVVTCGLPYTNGFCHLGHLRTYIPGDFYVRYLRRLGDDIVFICGSDNHGTPIVVTAEAEKTTPRAVSETYHAHFDNVFKSMGIAFDRFGMTDDPTNHHRTVSILQTLIDRGYVYEQTIQQSYCPKCKRFLPDRYVEGTCPYCGKHARGDECDSGCGRHLEPGEILDPVCATCGTKAELREQKHYYFKLSSFRDYLLEYLPTLGGTLNAKNYAIGWVENELKDWCITRMMDWGVKFPGSDDLVCYVWVDAPIGYISFTEEWAKATNNSWQKYWCEGDRVHFIGSDIIYHHCVFWPAMLHGAGYQPPTAVVASGMVTIDGEKFSKSKGNVVWTKEDYLDKGLPADYLRYYLLAYTSHTRELDFSWKEFQARINNELVNTFGNFANRSMSLVKTKFGDVPQVPVEAEIFAEIERSLAAIEESVRAYEFKAAVDGILLLAAYGNSYISNAAPWKLIKEDPQAAAQILKNCLQIVKACALIMQPVMPESSQKLWEMLGYTDKIESRPISDALVPFENTTLGDVKPLFARIEDKQREEMEAVLTKRAEDSKKKAAGKNTMEAVIEPISEEIITIDDVAKLDLRVGRVVKAERVPKTTKLLRLQVDIGTEVRQIVSGIADVYTPEEMVDKKIIVVVNLKPAKFRGEESNGMLFAAGEEASLLVPLKDVPEGTKVH.

Positions 13-23 (PYTNGFCHLGH) match the 'HIGH' region motif. Positions 144, 147, 156, and 160 each coordinate Zn(2+). Positions 325 to 329 (KFSKS) match the 'KMSKS' region motif. Lys-328 serves as a coordination point for ATP. The tRNA-binding domain maps to 575-673 (DVAKLDLRVG…KDVPEGTKVH (99 aa)).

It belongs to the class-I aminoacyl-tRNA synthetase family. MetG type 1 subfamily. Homodimer. Zn(2+) serves as cofactor.

The protein resides in the cytoplasm. It carries out the reaction tRNA(Met) + L-methionine + ATP = L-methionyl-tRNA(Met) + AMP + diphosphate. Its function is as follows. Is required not only for elongation of protein synthesis but also for the initiation of all mRNA translation through initiator tRNA(fMet) aminoacylation. This is Methionine--tRNA ligase from Methanocorpusculum labreanum (strain ATCC 43576 / DSM 4855 / Z).